The following is a 127-amino-acid chain: Large ribosomal subunit protein bL12 (127 aa).

Belongs to the bacterial ribosomal protein bL12 family. As to quaternary structure, homodimer. Part of the ribosomal stalk of the 50S ribosomal subunit. Forms a multimeric L10(L12)X complex, where L10 forms an elongated spine to which 2 to 4 L12 dimers bind in a sequential fashion. Binds GTP-bound translation factors.

Forms part of the ribosomal stalk which helps the ribosome interact with GTP-bound translation factors. Is thus essential for accurate translation. The polypeptide is Large ribosomal subunit protein bL12 (Streptococcus thermophilus (strain CNRZ 1066)).